We begin with the raw amino-acid sequence, 677 residues long: Polyunsaturated fatty acid lipoxygenase ALOX15B (677 aa).

Positions 2-125 constitute a PLAT domain; that stretch reads AKFRVRVSTG…ELVLREGAAK (124 aa). Residues glycine 15, glycine 17, aspartate 39, histidine 40, glycine 42, glutamate 44, aspartate 86, and alanine 87 each contribute to the Ca(2+) site. One can recognise a Lipoxygenase domain in the interval 126 to 677; it reads VSWQDHHRTL…PPLIENSVSI (552 aa). The Fe cation site is built by histidine 374, histidine 379, histidine 554, and isoleucine 677.

It belongs to the lipoxygenase family. Fe cation is required as a cofactor.

The protein resides in the cytoplasm. Its subcellular location is the cytosol. The protein localises to the cell membrane. It localises to the cytoskeleton. It is found in the membrane. The protein resides in the cell junction. Its subcellular location is the adherens junction. The protein localises to the focal adhesion. It localises to the nucleus. It carries out the reaction (5Z,8Z,11Z,14Z)-eicosatetraenoate + O2 = (15S)-hydroperoxy-(5Z,8Z,11Z,13E)-eicosatetraenoate. The enzyme catalyses (9Z,12Z)-octadecadienoate + O2 = 13-hydroperoxy-(9Z,11E)-octadecadienoate. It catalyses the reaction (5S)-hydroxy-(6E,8Z,11Z,14Z)-eicosatetraenoate + O2 = (5S)-hydroxy-(15S)-hydroperoxy-(6E,8Z,11Z,13E)-eicosatetraenoate. The catalysed reaction is (5Z,8Z,11Z,14Z)-eicosatetraenoate + O2 = 5-hydroperoxy-(6E,8Z,11Z,14Z)-eicosatetraenoate. It carries out the reaction (5S,6R)-dihydroxy-(7E,9E,11Z,14Z)-eicosatetraenoate + O2 = (5S,6R)-dihydroxy-(15S)-hydroperoxy-(7E,9E,11Z,13E)-eicosatetraenoate. The enzyme catalyses (5S)-hydroperoxy-(6E,8Z,11Z,14Z)-eicosatetraenoate + O2 = (5S,15S)-dihydroperoxy-(6E,8Z,11Z,13E)-eicosatetraenoate. It catalyses the reaction 2-(5Z,8Z,11Z,14Z-eicosatetraenoyl)-glycerol + O2 = 2-[15(S)-hydroperoxy-(5Z,8Z,11Z,13E)-eicosatetraenoyl]-glycerol. The catalysed reaction is (8S)-hydroperoxy-(5Z,9E,11Z,14Z)-eicosatetraenoate + O2 = (8S,15S)-dihydroperoxy-(5Z,9E,11Z,13E)-eicosatetraenoate. It carries out the reaction N-(5Z,8Z,11Z,14Z)-eicosatetraenoyl-L-alanine + O2 = N-(15S)-hydroperoxy-(5Z,8Z,11Z,13E)-eicosatetraenoyl-alanine. The enzyme catalyses N-(5Z,8Z,11Z,14Z)-eicosatetraenoyl-gamma-aminobutanoate + O2 = N-(15S)-hydroperoxy-(5Z,8Z,11Z,13E)-eicosatetraenoyl-gamma-aminobutanoate. It catalyses the reaction N-(5Z,8Z,11Z,14Z)-eicosatetraenoyl-glycine + O2 = N-(15S)-hydroperoxy-(5Z,8Z,11Z,13E)-eicosatetraenoyl-glycine. The catalysed reaction is N-(5Z,8Z,11Z,14Z)-eicosatetraenoyl-taurine + O2 = N-(15S)-hydroperoxy-(5Z,8Z,11Z,13E)-eicosatetraenoyl-taurine. It carries out the reaction 2-(5Z,8Z,11Z,14Z-eicosatetraenoyl)-glycerol + O2 = 2-[12-hydroperoxy-(5Z,8Z,10E,14Z)-eicosatetraenoyl]-glycerol. The enzyme catalyses 1-octadecanoyl-2-(5Z,8Z,11Z,14Z-eicosatetraenoyl)-sn-glycero-3-phosphocholine + O2 = 1-octadecanoyl-2-(15-hydroperoxy-5Z,8Z,11Z,13E-eicosatetraenoyl)-sn-glycero-3-phosphocholine. It catalyses the reaction a 1-acyl-2-(5Z,8Z,11Z,14Z-eicosatetraenoyl)-sn-glycero-3-phospho-(1D-myo-inositol) + O2 = a 1-acyl-2-(15-hydroperoxy-5Z,8Z,11Z,13E-eicosatetraenoyl)-sn-glycero-3-phospho-(1D-myo-inositol). The catalysed reaction is a 1-acyl-2-(8Z,11Z,14Z-eicosatrienoyl)-sn-glycero-3-phospho-(1D-myo-inositol) + O2 = a 1-acyl-2-(15-hydroperoxy-8Z,11Z,13E-eicosatrienoyl)-sn-glycero-3-phospho-(1D-myo-inositol). It carries out the reaction 1-octadecanoyl-2-(5Z,8Z,11Z,14Z)-eicosatetraenoyl-sn-glycero-3-phosphoethanolamine + O2 = 1-octadecanoyl-2-(15-hydroperoxy-5Z,8Z,11Z,13E-eicosatetraenoyl)-sn-glycero-3-phosphoethanolamine. The enzyme catalyses 1-octadecanoyl-2-(5Z,8Z,11Z,14Z-eicosatetraenoyl)-sn-glycero-3-phospho-(1D-myo-inositol) + O2 = 1-octadecanoyl-2-(15-hydroperoxy-5Z,8Z,11Z,13E-eicosatetraenoyl)-sn-glycero-3-phospho-(1D-myo-inositol). It catalyses the reaction (8Z,11Z,14Z)-eicosatrienoate + O2 = 15-hydroperoxy-(8Z,11Z,13E)-eicosatrienoate. The catalysed reaction is (7S)-hydroperoxy-(4Z,8E,10Z,13Z,16Z,19Z)-docosahexaenoate + O2 = (7S,17S)-dihydroperoxy-(4Z,8E,10Z,13Z,15E,19Z)-docosahexaenoate. Its pathway is lipid metabolism; hydroperoxy eicosatetraenoic acid biosynthesis. Functionally, non-heme iron-containing dioxygenase that catalyzes the stereo-specific peroxidation of free and esterified polyunsaturated fatty acids (PUFAs) generating a spectrum of bioactive lipid mediators. Inserts a peroxyl group at C15 of arachidonate ((5Z,8Z,11Z,14Z)-eicosatetraenoate) producing (15S)-hydroperoxyeicosatetraenoate/(15S)-HPETE. Also peroxidizes linoleate ((9Z,12Z)-octadecadienoate) to 13-hydroperoxyoctadecadienoate/13-HPODE. Oxygenates arachidonyl derivatives such as 2-arachidonoylglycerol (2-AG) leading to the production and extracellular release of 15-hydroxyeicosatetraenoyl glycerol (15-HETE-G) that acts as a peroxisome proliferator-activated receptor alpha agonist. Has the ability to efficiently class-switch ALOX5 pro-inflammatory mediators into anti-inflammatory intermediates. Participates in the sequential oxidations of DHA ((4Z,7Z,10Z,13Z,16Z,19Z)-docosahexaenoate) to generate specialized pro-resolving mediators (SPMs) resolvin D5 ((7S,17S)-diHPDHA), which can actively down-regulate the immune response and have anti-aggregation properties with platelets. In addition to free PUFAs hydrolyzed from phospholipids, it directly oxidizes PUFAs esterified to membrane-bound phospholipids. Has no detectable 8S-lipoxygenase activity on arachidonate but reacts with (8S)-HPETE to produce (8S,15S)-diHPETE. May regulate progression through the cell cycle and cell proliferation. May also regulate cytokine secretion by macrophages and therefore play a role in the immune response. May also regulate macrophage differentiation into proatherogenic foam cells. The sequence is that of Polyunsaturated fatty acid lipoxygenase ALOX15B from Rattus norvegicus (Rat).